A 119-amino-acid chain; its full sequence is NADH-quinone oxidoreductase subunit A (119 aa).

3 helical membrane passes run 9–29 (VILF…LGFL), 63–83 (LVAI…PWAV), and 88–108 (IGAT…VGFV).

Belongs to the complex I subunit 3 family. As to quaternary structure, NDH-1 is composed of 14 different subunits. Subunits NuoA, H, J, K, L, M, N constitute the membrane sector of the complex.

The protein resides in the cell inner membrane. It catalyses the reaction a quinone + NADH + 5 H(+)(in) = a quinol + NAD(+) + 4 H(+)(out). In terms of biological role, NDH-1 shuttles electrons from NADH, via FMN and iron-sulfur (Fe-S) centers, to quinones in the respiratory chain. The immediate electron acceptor for the enzyme in this species is believed to be ubiquinone. Couples the redox reaction to proton translocation (for every two electrons transferred, four hydrogen ions are translocated across the cytoplasmic membrane), and thus conserves the redox energy in a proton gradient. The protein is NADH-quinone oxidoreductase subunit A of Leptothrix cholodnii (strain ATCC 51168 / LMG 8142 / SP-6) (Leptothrix discophora (strain SP-6)).